Reading from the N-terminus, the 645-residue chain is Sodium/hydrogen exchanger 9 (645 aa).

Over 1–20 (MERQSRVMSEKDEYQFQHQG) the chain is Lumenal. A helical transmembrane segment spans residues 21 to 41 (AVELLVFNFLLILTILTIWLF). Residues 42 to 45 (KNHR) lie on the Cytoplasmic side of the membrane. The helical transmembrane segment at 46–66 (FRFLHETGGAMVYGLIMGLIL) threads the bilayer. The Lumenal segment spans residues 67 to 126 (RYATAPTDIESGTVYDCVKLTFSPSTLLVNITDQVYEYKYKREISQHNINPHQGNAILEK). An N-linked (GlcNAc...) asparagine glycan is attached at Asn-96. The chain crosses the membrane as a helical span at residues 127–147 (MTFDPEIFFNVLLPPIIFHAG). Residues 148–164 (YSLKKRHFFQNLGSILT) lie on the Cytoplasmic side of the membrane. A helical membrane pass occupies residues 165-185 (YAFLGTAISCIVIGLIMYGFV). Over 186–203 (KAMIHAGQLKNGDFHFTD) the chain is Lumenal. The helical transmembrane segment at 204–224 (CLFFGSLMSATDPVTVLAIFH) threads the bilayer. The Cytoplasmic segment spans residues 225 to 235 (ELHVDPDLYTL). The helical transmembrane segment at 236–256 (LFGESVLNDAVAIVLTYSISI) threads the bilayer. Over 257–277 (YSPKENPNAFDAAAFFQSVGN) the chain is Lumenal. Residues 278–298 (FLGIFAGSFAMGSAYAIITAL) traverse the membrane as a helical segment. Residues 299 to 301 (LTK) are Cytoplasmic-facing. 2 helical membrane-spanning segments follow: residues 302 to 322 (FTKLCEFPMLETGLFFLLSWS) and 323 to 343 (AFLSAEAAGLTGIVAVLFCGV). Residues 344–364 (TQAHYTYNNLSSDSKIRTKQL) lie on the Cytoplasmic side of the membrane. Residues 365 to 385 (FEFMNFLAENVIFCYMGLALF) traverse the membrane as a helical segment. Thr-386 is a topological domain (lumenal). Residues 387–407 (FQNHIFNALFILGAFLAIFVA) form a helical membrane-spanning segment. The Cytoplasmic segment spans residues 408-429 (RACNIYPLSFLLNLGRKQKIPW). The helical transmembrane segment at 430–450 (NFQHMMMFSGLRGAIAFALAI) threads the bilayer. Topologically, residues 451–465 (RNTESQPKQMMFTTT) are lumenal. A helical membrane pass occupies residues 466–486 (LLLVFFTVWVFGGGTTPMLTW). The Cytoplasmic portion of the chain corresponds to 487-645 (LQIRVGVDLD…EQTLGQSQLN (159 aa)). A disordered region spans residues 594-622 (QASSPCSPPARLGLDQKASPQTPGKENIY).

Belongs to the monovalent cation:proton antiporter 1 (CPA1) transporter (TC 2.A.36) family. Homodimer; phosphatidylinositol-4,5-bisphosphate (PIP2) and phosphatidylinositol 3,4,5-trisphosphate (PIP3) could be involved in the dimer stabilization. Interacts (via the C-terminus) with RACK1. Interacts with CHP1. In terms of tissue distribution, ubiquitously expressed in all tissues tested. Expressed at highest levels in heart and skeletal muscle, followed by placenta, kidney, and liver. Expressed in the brain, in the medulla and spinal cord.

It localises to the late endosome membrane. The protein localises to the early endosome membrane. Its subcellular location is the recycling endosome membrane. It is found in the cell membrane. The protein resides in the cytoplasmic vesicle. It localises to the phagosome membrane. It carries out the reaction Na(+)(in) + H(+)(out) = Na(+)(out) + H(+)(in). It catalyses the reaction K(+)(in) + H(+)(out) = K(+)(out) + H(+)(in). Functionally, endosomal Na(+), K(+)/H(+) antiporter. Mediates the electroneutral exchange of endosomal luminal H(+) for a cytosolic Na(+) or K(+). By facilitating proton efflux, SLC9A9 counteracts the acidity generated by vacuolar (V)-ATPase, thereby limiting luminal acidification. Regulates organellar pH and consequently, e.g., endosome maturation and endocytic trafficking of plasma membrane receptors and neurotransporters. Promotes the recycling of transferrin receptors back to the cell surface to facilitate additional iron uptake in the brain. Regulates synaptic transmission by regulating the luminal pH of axonal endosomes. Regulates phagosome lumenal pH, thus affecting phagosome maturation, and consequently, microbicidal activity in macrophages. Can also be active at the cell surface of specialized cells, e.g., in the inner ear hair bundles uses the high K(+) of the endolymph to regulate intracelular pH. This Homo sapiens (Human) protein is Sodium/hydrogen exchanger 9.